Reading from the N-terminus, the 483-residue chain is Cobyric acid synthase (483 aa).

A GATase cobBQ-type domain is found at 248-434; sequence ALRVVVPVLP…LHGLFEQPSA (187 aa). Residue Cys329 is the Nucleophile of the active site. His426 is a catalytic residue.

The protein belongs to the CobB/CobQ family. CobQ subfamily.

It functions in the pathway cofactor biosynthesis; adenosylcobalamin biosynthesis. Its function is as follows. Catalyzes amidations at positions B, D, E, and G on adenosylcobyrinic A,C-diamide. NH(2) groups are provided by glutamine, and one molecule of ATP is hydrogenolyzed for each amidation. This chain is Cobyric acid synthase, found in Ectopseudomonas mendocina (strain ymp) (Pseudomonas mendocina).